The following is a 74-amino-acid chain: U2-sicaritoxin-Sdo1a (74 aa).

The first 20 residues, 1–20 (MKLSFCFFLCAIVLFSFAEA), serve as a signal peptide directing secretion. Residues 21-39 (RINPNQLKRLRELVRDDEP) constitute a propeptide that is removed on maturation. Cystine bridges form between cysteine 42/cysteine 59, cysteine 49/cysteine 62, and cysteine 58/cysteine 71.

In terms of tissue distribution, expressed by the venom gland.

It is found in the secreted. In Hexophthalma dolichocephala (Afrotropical spider), this protein is U2-sicaritoxin-Sdo1a.